We begin with the raw amino-acid sequence, 346 residues long: MKKIEIELNERSYPIHLGTMECLEHAGAVLVVTNPKVGGLYLSYVLERIRAREVFVCTTPDGEAYKTLESVEMILESAFNHRLDRKSLMIALGGGVIGDMVGFASGIFQRGIGFVQIPTTLLSQVDASVGGKTGVNNAFGKNLIGLFHQPKAVYIDPLFLKSLPPREFGAGVAEMVKMAVTFDREFFEELERGDLRDHSFLLKGIERCVKIKARVVAMDEREQGIRAALNYGHTFGHVIEHESGYGHYLHGEAVGMGMVMANTLACGLGLLKESEAERIEKLLARYEIPTRYAIGDVERFYDLFFLDKKSENQKIKFILPEGIGGVAFRDDLSKSMVLSVLEAFCD.

Residues 61 to 66, 95 to 99, 119 to 120, Lys132, and Lys141 each bind NAD(+); these read DGEAYK, GVIGD, and TT. Positions 174, 233, and 250 each coordinate Zn(2+).

This sequence belongs to the sugar phosphate cyclases superfamily. Dehydroquinate synthase family. NAD(+) is required as a cofactor. Co(2+) serves as cofactor. It depends on Zn(2+) as a cofactor.

The protein localises to the cytoplasm. The catalysed reaction is 7-phospho-2-dehydro-3-deoxy-D-arabino-heptonate = 3-dehydroquinate + phosphate. It functions in the pathway metabolic intermediate biosynthesis; chorismate biosynthesis; chorismate from D-erythrose 4-phosphate and phosphoenolpyruvate: step 2/7. Functionally, catalyzes the conversion of 3-deoxy-D-arabino-heptulosonate 7-phosphate (DAHP) to dehydroquinate (DHQ). The sequence is that of 3-dehydroquinate synthase from Wolinella succinogenes (strain ATCC 29543 / DSM 1740 / CCUG 13145 / JCM 31913 / LMG 7466 / NCTC 11488 / FDC 602W) (Vibrio succinogenes).